Reading from the N-terminus, the 127-residue chain is Large ribosomal subunit protein bL12 (127 aa).

Belongs to the bacterial ribosomal protein bL12 family. Homodimer. Part of the ribosomal stalk of the 50S ribosomal subunit. Forms a multimeric L10(L12)X complex, where L10 forms an elongated spine to which 2 to 4 L12 dimers bind in a sequential fashion. Binds GTP-bound translation factors.

In terms of biological role, forms part of the ribosomal stalk which helps the ribosome interact with GTP-bound translation factors. Is thus essential for accurate translation. In Thiobacillus denitrificans (strain ATCC 25259 / T1), this protein is Large ribosomal subunit protein bL12.